Here is a 292-residue protein sequence, read N- to C-terminus: MKSEAKDGEEESLQTAFKKLRVDASGSIASLSVGEGTGVRAPVRTATDDTKPKTTCASKDSWHGSTRKSSRGVVRTQRRRRSKSPVLHPPKFIHCSTIASSSSSQLKHKSQTDSPDGSSGLGISSPKEFSAGESSASLDANHTGAVVEPLRTSVPRLPSESKKEDSSDATQVSQASLKASDLSDFQSVSKLNQGTPCTCIGKECQCKRWHDMEVYSFSGLQSVPPLAPERRSTLEDYSQSLHARTLSGSPRSCSEQARVFVDDVTIEDLSGYMEYYLYIPKKMSHMAEMMYT.

Residues Ser27–Ala175 are disordered. The span at Ser65–Lys83 shows a compositional bias: basic residues. 2 positions are modified to phosphothreonine: Thr143 and Thr233.

This chain is Oxidative stress-responsive serine-rich protein 1 (OSER1), found in Pongo abelii (Sumatran orangutan).